The following is a 284-amino-acid chain: Nucleotide-binding protein NMA0948 (284 aa).

ATP is bound at residue 8-15 (GLSGSGKS). Residue 58–61 (DVRS) participates in GTP binding.

Belongs to the RapZ-like family.

Its function is as follows. Displays ATPase and GTPase activities. The protein is Nucleotide-binding protein NMA0948 of Neisseria meningitidis serogroup A / serotype 4A (strain DSM 15465 / Z2491).